A 732-amino-acid polypeptide reads, in one-letter code: Myosin heavy chain kinase B (732 aa).

The 205-residue stretch at 124-328 folds into the Alpha-type protein kinase domain; it reads DPYTTTAQWT…ICQYLNLQSI (205 aa). 298-303 contacts ATP; that stretch reads GIGNLG. A disordered region spans residues 331 to 428; sequence KSEKSDCGTV…TNKERSKSKS (98 aa). Over residues 356 to 394 the composition is skewed to low complexity; the sequence is NNNNNNNNNNNNNNNNNNSNNNNNNNSSISKSLVEISSG. Over residues 395-404 the composition is skewed to basic and acidic residues; sequence SKERNDRDSP. A compositionally biased stretch (polar residues) spans 405-419; it reads SRQLFVSNDGNTLNT. WD repeat units lie at residues 458–486, 500–528, 540–568, 580–608, 620–648, 660–688, and 700–730; these read KGYH…RVYD, GHEG…KVWD, GHDK…KVWD, SHAR…KVWD, GHTK…RVWN, GHDR…KIWD, and GHNA…RVWG.

This sequence belongs to the protein kinase superfamily. Alpha-type protein kinase family. ALPK subfamily.

The catalysed reaction is L-threonyl-[myosin heavy-chain] + ATP = O-phospho-L-threonyl-[myosin heavy-chain] + ADP + H(+). Its function is as follows. Catalyzes its autophosphorylation, which is needed for enzymatic activity and phosphorylates myosin II heavy chain at a threonine in the C-terminal tail region. This phosphorylation is critical in regulating the assembly and disassembly of myosin II filament. Participates in control of myosin localization. The sequence is that of Myosin heavy chain kinase B (mhkB) from Dictyostelium discoideum (Social amoeba).